The primary structure comprises 152 residues: Deoxyuridine 5'-triphosphate nucleotidohydrolase (152 aa).

Residues R71–G73, N84, L88–D90, and M98 contribute to the substrate site.

This sequence belongs to the dUTPase family. The cofactor is Mg(2+).

It catalyses the reaction dUTP + H2O = dUMP + diphosphate + H(+). It functions in the pathway pyrimidine metabolism; dUMP biosynthesis; dUMP from dCTP (dUTP route): step 2/2. Its function is as follows. This enzyme is involved in nucleotide metabolism: it produces dUMP, the immediate precursor of thymidine nucleotides and it decreases the intracellular concentration of dUTP so that uracil cannot be incorporated into DNA. The polypeptide is Deoxyuridine 5'-triphosphate nucleotidohydrolase (Pectobacterium carotovorum subsp. carotovorum (strain PC1)).